The chain runs to 467 residues: Ran-binding protein M homolog (467 aa).

The disordered stretch occupies residues Met1–Leu25. Over residues Asn9–Leu25 the composition is skewed to polar residues. The B30.2/SPRY domain occupies Asp31–Phe219. Residues Pro244–Val276 enclose the LisH domain. Positions Ala295–Glu353 constitute a CTLH domain.

It belongs to the RANBP9/10 family. Interacts with WDR36, WDS, GID8, MAEA and RMD5.

The protein resides in the cytoplasm. Its subcellular location is the nucleus. The protein localises to the perinuclear region. This chain is Ran-binding protein M homolog, found in Arabidopsis thaliana (Mouse-ear cress).